The sequence spans 160 residues: Endoribonuclease YbeY (160 aa).

Residues His121, His125, and His131 each contribute to the Zn(2+) site.

Belongs to the endoribonuclease YbeY family. Zn(2+) is required as a cofactor.

The protein localises to the cytoplasm. Its function is as follows. Single strand-specific metallo-endoribonuclease involved in late-stage 70S ribosome quality control and in maturation of the 3' terminus of the 16S rRNA. The protein is Endoribonuclease YbeY of Syntrophus aciditrophicus (strain SB).